Consider the following 274-residue polypeptide: tRNA-cytidine(32) 2-sulfurtransferase (274 aa).

A PP-loop motif motif is present at residues 40-45; it reads SGGKDS. Cysteine 115, cysteine 118, and cysteine 206 together coordinate [4Fe-4S] cluster.

The protein belongs to the TtcA family. As to quaternary structure, homodimer. Mg(2+) is required as a cofactor. It depends on [4Fe-4S] cluster as a cofactor.

The protein resides in the cytoplasm. It carries out the reaction cytidine(32) in tRNA + S-sulfanyl-L-cysteinyl-[cysteine desulfurase] + AH2 + ATP = 2-thiocytidine(32) in tRNA + L-cysteinyl-[cysteine desulfurase] + A + AMP + diphosphate + H(+). It functions in the pathway tRNA modification. Its function is as follows. Catalyzes the ATP-dependent 2-thiolation of cytidine in position 32 of tRNA, to form 2-thiocytidine (s(2)C32). The sulfur atoms are provided by the cysteine/cysteine desulfurase (IscS) system. The sequence is that of tRNA-cytidine(32) 2-sulfurtransferase from Pseudomonas fluorescens (strain SBW25).